A 214-amino-acid polypeptide reads, in one-letter code: Thymidylate kinase (214 aa).

7–14 (GIEGAGKT) contributes to the ATP binding site.

This sequence belongs to the thymidylate kinase family.

It catalyses the reaction dTMP + ATP = dTDP + ADP. In terms of biological role, phosphorylation of dTMP to form dTDP in both de novo and salvage pathways of dTTP synthesis. The chain is Thymidylate kinase from Desulfosudis oleivorans (strain DSM 6200 / JCM 39069 / Hxd3) (Desulfococcus oleovorans).